The sequence spans 274 residues: Oxidized low-density lipoprotein receptor 1 (274 aa).

Over residues M1–D16 the composition is skewed to basic and acidic residues. Residues M1–K25 are disordered. At M1 to S31 the chain is on the cytoplasmic side. The chain crosses the membrane as a helical; Signal-anchor for type II membrane protein span at residues S32 to I54. 2 S-palmitoyl cysteine lipidation sites follow: C36 and C46. The neck stretch occupies residues M55–W150. Residues M55–E274 are Extracellular-facing. Residues N73 and N139 are each glycosylated (N-linked (GlcNAc...) asparagine). Residues Q84–N139 are a coiled coil. Intrachain disulfides connect C144-C155, C172-C264, and C243-C256. In terms of domain architecture, C-type lectin spans H151–Q265.

In terms of assembly, homodimer; disulfide-linked. May form a hexamer composed of 3 homodimers. Interacts with HSP70. N-glycosylated.

The protein resides in the cell membrane. It localises to the membrane raft. The protein localises to the secreted. Its function is as follows. Receptor that mediates the recognition, internalization and degradation of oxidatively modified low density lipoprotein (oxLDL) by vascular endothelial cells. OxLDL is a marker of atherosclerosis that induces vascular endothelial cell activation and dysfunction, resulting in pro-inflammatory responses, pro-oxidative conditions and apoptosis. Its association with oxLDL induces the activation of NF-kappa-B through an increased production of intracellular reactive oxygen and a variety of pro-atherogenic cellular responses including a reduction of nitric oxide (NO) release, monocyte adhesion and apoptosis. In addition to binding oxLDL, it acts as a receptor for the HSP70 protein involved in antigen cross-presentation to naive T-cells in dendritic cells, thereby participating in cell-mediated antigen cross-presentation. Also involved in inflammatory process, by acting as a leukocyte-adhesion molecule at the vascular interface in endotoxin-induced inflammation. Also acts as a receptor for advanced glycation end (AGE) products, activated platelets, monocytes, apoptotic cells and both Gram-negative and Gram-positive bacteria. The sequence is that of Oxidized low-density lipoprotein receptor 1 (OLR1) from Oryctolagus cuniculus (Rabbit).